The sequence spans 1872 residues: Plexin-A3 (1872 aa).

The N-terminal stretch at 1 to 19 (MHTVCLLPLLFFTIGGCLG) is a signal peptide. A Sema domain is found at 20 to 489 (SSRPFRTFVV…SEKQVSQLPV (470 aa)). Residues 20-1220 (SSRPFRTFVV…ITADRALTLP (1201 aa)) are Extracellular-facing. N-linked (GlcNAc...) asparagine glycosylation occurs at Asn60. 9 disulfides stabilise this stretch: Cys78–Cys87, Cys113–Cys121, Cys267–Cys388, Cys283–Cys339, Cys357–Cys376, Cys492–Cys509, Cys498–Cys540, Cys501–Cys518, and Cys512–Cys524. Asn549 is a glycosylation site (N-linked (GlcNAc...) asparagine). Residues Cys575 and Cys595 are joined by a disulfide bond. IPT/TIG domains lie at 841–934 (PRIT…YSFV), 936–1021 (PTLD…YTYT), 1024–1123 (PTVT…FTYY), and 1126–1212 (PSFE…LHIT). Asn1163 carries N-linked (GlcNAc...) asparagine glycosylation. A helical transmembrane segment spans residues 1221-1241 (AMVGLAAGGGLLLLAITVVLV). Positions 1240-1294 (LVAYKRKTQDADRTLKRLQLQMDNLESRVALECKEAFAELQTDINELTNHMDGVQ) form a coiled coil. Residues 1242-1872 (AYKRKTQDAD…QIITLVSSSS (631 aa)) are Cytoplasmic-facing. At Ser1597 the chain carries Phosphoserine.

It belongs to the plexin family.

It localises to the cell membrane. Its function is as follows. Coreceptor for SEMA3A and SEMA3F. Necessary for signaling by class 3 semaphorins and subsequent remodeling of the cytoskeleton. Plays a role in axon guidance in the developing nervous system. Regulates the migration of sympathetic neurons, but not of neural crest precursors. Required for normal dendrite spine morphology in pyramidal neurons. May play a role in regulating semaphorin-mediated programmed cell death in the developing nervous system. Class 3 semaphorins bind to a complex composed of a neuropilin and a plexin. The plexin modulates the affinity of the complex for specific semaphorins, and its cytoplasmic domain is required for the activation of down-stream signaling events in the cytoplasm. In Rattus norvegicus (Rat), this protein is Plexin-A3 (Plxna3).